The sequence spans 199 residues: ATP-dependent Clp protease proteolytic subunit (199 aa).

Ser-99 (nucleophile) is an active-site residue. His-124 is an active-site residue.

It belongs to the peptidase S14 family. In terms of assembly, fourteen ClpP subunits assemble into 2 heptameric rings which stack back to back to give a disk-like structure with a central cavity, resembling the structure of eukaryotic proteasomes.

Its subcellular location is the cytoplasm. It catalyses the reaction Hydrolysis of proteins to small peptides in the presence of ATP and magnesium. alpha-casein is the usual test substrate. In the absence of ATP, only oligopeptides shorter than five residues are hydrolyzed (such as succinyl-Leu-Tyr-|-NHMec, and Leu-Tyr-Leu-|-Tyr-Trp, in which cleavage of the -Tyr-|-Leu- and -Tyr-|-Trp bonds also occurs).. Its function is as follows. Cleaves peptides in various proteins in a process that requires ATP hydrolysis. Has a chymotrypsin-like activity. Plays a major role in the degradation of misfolded proteins. This chain is ATP-dependent Clp protease proteolytic subunit, found in Moorella thermoacetica (strain ATCC 39073 / JCM 9320).